The chain runs to 72 residues: Cytochrome c oxidase subunit 2 (72 aa).

Residues 1 to 14 lie on the Mitochondrial intermembrane side of the membrane; that stretch reads MAHPSQLGFQDAAS. The chain crosses the membrane as a helical span at residues 15 to 45; the sequence is PVMEELLHFHDHALMIVFLISTLVLYIIVAM. Over 46–72 the chain is Mitochondrial matrix; sequence VSTKLTNKHILDSQEVEIVWTILPAVI.

It belongs to the cytochrome c oxidase subunit 2 family. As to quaternary structure, component of the cytochrome c oxidase (complex IV, CIV), a multisubunit enzyme composed of 14 subunits. The complex is composed of a catalytic core of 3 subunits MT-CO1, MT-CO2 and MT-CO3, encoded in the mitochondrial DNA, and 11 supernumerary subunits COX4I, COX5A, COX5B, COX6A, COX6B, COX6C, COX7A, COX7B, COX7C, COX8 and NDUFA4, which are encoded in the nuclear genome. The complex exists as a monomer or a dimer and forms supercomplexes (SCs) in the inner mitochondrial membrane with NADH-ubiquinone oxidoreductase (complex I, CI) and ubiquinol-cytochrome c oxidoreductase (cytochrome b-c1 complex, complex III, CIII), resulting in different assemblies (supercomplex SCI(1)III(2)IV(1) and megacomplex MCI(2)III(2)IV(2)). Found in a complex with TMEM177, COA6, COX18, COX20, SCO1 and SCO2. Interacts with TMEM177 in a COX20-dependent manner. Interacts with COX20. Interacts with COX16. It depends on Cu cation as a cofactor.

It is found in the mitochondrion inner membrane. It carries out the reaction 4 Fe(II)-[cytochrome c] + O2 + 8 H(+)(in) = 4 Fe(III)-[cytochrome c] + 2 H2O + 4 H(+)(out). Component of the cytochrome c oxidase, the last enzyme in the mitochondrial electron transport chain which drives oxidative phosphorylation. The respiratory chain contains 3 multisubunit complexes succinate dehydrogenase (complex II, CII), ubiquinol-cytochrome c oxidoreductase (cytochrome b-c1 complex, complex III, CIII) and cytochrome c oxidase (complex IV, CIV), that cooperate to transfer electrons derived from NADH and succinate to molecular oxygen, creating an electrochemical gradient over the inner membrane that drives transmembrane transport and the ATP synthase. Cytochrome c oxidase is the component of the respiratory chain that catalyzes the reduction of oxygen to water. Electrons originating from reduced cytochrome c in the intermembrane space (IMS) are transferred via the dinuclear copper A center (CU(A)) of subunit 2 and heme A of subunit 1 to the active site in subunit 1, a binuclear center (BNC) formed by heme A3 and copper B (CU(B)). The BNC reduces molecular oxygen to 2 water molecules using 4 electrons from cytochrome c in the IMS and 4 protons from the mitochondrial matrix. The chain is Cytochrome c oxidase subunit 2 (mt-co2) from Atractosteus spatula (Alligator gar).